The sequence spans 486 residues: Cardiolipin synthase A (486 aa).

Helical transmembrane passes span 3 to 23 and 38 to 58; these read TFYTVISWLSVFGYWLLIAGV and MAWLLIIYILPLVGIIAYLSF. 2 consecutive PLD phosphodiesterase domains span residues 219–246 and 399–426; these read MDLRQHRKIVLIDNYVAYTGSMNMVDPR and EGGLLHSKSVLVDGQLSLVGTVNLDMRS. Residues His-224, Lys-226, Asp-231, His-404, Lys-406, and Asp-411 contribute to the active site.

It belongs to the phospholipase D family. Cardiolipin synthase subfamily. ClsA sub-subfamily.

The protein resides in the cell inner membrane. The enzyme catalyses 2 a 1,2-diacyl-sn-glycero-3-phospho-(1'-sn-glycerol) = a cardiolipin + glycerol. Catalyzes the reversible phosphatidyl group transfer from one phosphatidylglycerol molecule to another to form cardiolipin (CL) (diphosphatidylglycerol) and glycerol. The sequence is that of Cardiolipin synthase A from Yersinia pseudotuberculosis serotype IB (strain PB1/+).